The sequence spans 398 residues: Odorant receptor 59b (398 aa).

At 1 to 46 (MAVFKLIKPAPLTEKVQSRQGNIYLYRAMWLIGWIPPKEGVLRYVY) the chain is on the cytoplasmic side. A helical membrane pass occupies residues 47 to 67 (LFWTCVPFAFGVFYLPVGFII). The Extracellular segment spans residues 68 to 84 (SYVQEFKNFTPGEFLTS). The helical transmembrane segment at 85 to 105 (LQVCINVYGASVKSTITYLFL) threads the bilayer. At 106-141 (WRLRKTEILLDSLDKRLANDSDRERIHNMVARCNYA) the chain is on the cytoplasmic side. A helical membrane pass occupies residues 142 to 162 (FLIYSFIYCGYAGSTFLSYAL). Over 163 to 179 (SGRPPWSVYNPFIDWRD) the chain is Extracellular. A helical membrane pass occupies residues 180-200 (GMGSLWIQAIFEYITMSFAVL). The Cytoplasmic segment spans residues 201-269 (QDQLSDTYPL…DMIRPMISRT (69 aa)). A helical membrane pass occupies residues 270–290 (IFVQFALIGSVLGLTLVNVFF). Over 291–293 (FSN) the chain is Extracellular. A helical membrane pass occupies residues 294-314 (FWKGVASLLFVITILLQTFPF). Over 315-348 (CYTCNMLIDDAQDLSNEIFQSNWVDAEPRYKATL) the chain is Cytoplasmic. The helical transmembrane segment at 349–369 (VLFMHHVQQPIIFIAGGIFPI) threads the bilayer. Residues 370-398 (SMNSNITVAKFAFSIITIVRQMNLAEQFQ) lie on the Extracellular side of the membrane. N-linked (GlcNAc...) asparagine glycosylation is present at asparagine 374.

It belongs to the insect chemoreceptor superfamily. Heteromeric odorant receptor channel (TC 1.A.69) family. Or2a subfamily. Interacts with Orco. Complexes exist early in the endomembrane system in olfactory sensory neurons (OSNs), coupling these complexes to the conserved ciliary trafficking pathway. In terms of tissue distribution, expressed in olfactory sensory neurons in the antenna.

Its subcellular location is the cell membrane. Functionally, odorant receptor which mediates acceptance or avoidance behavior, depending on its substrates. The odorant receptor repertoire encodes a large collection of odor stimuli that vary widely in identity, intensity, and duration. Forms a complex with Orco to form odorant-sensing units, providing sensitive and prolonged odorant signaling and calcium permeability. Also plays a role in the response to N,N-Diethyl-meta-toluamide (DEET), the most widely used insect repellent worldwide. The chain is Odorant receptor 59b (Or59b) from Drosophila melanogaster (Fruit fly).